The chain runs to 917 residues: Serine/arginine repetitive matrix protein 1 (917 aa).

Methionine 1 is modified (N-acetylmethionine). Residues 1 to 151 (MDAGFFRGTS…ASMKKQDEDK (151 aa)) are necessary for DNA and RNA-binding. Residues 1 to 156 (MDAGFFRGTS…QDEDKDKRDK (156 aa)) are necessary for mRNA 3'-end cleavage and cytoplasmic accumulation. Position 7 is a citrulline (arginine 7). The PWI domain occupies 27-126 (QLKFAECLEK…AGIPSAFLEL (100 aa)). Lysine 127 participates in a covalent cross-link: Glycyl lysine isopeptide (Lys-Gly) (interchain with G-Cter in SUMO2). Over residues 139–170 (EKLASMKKQDEDKDKRDKEEKESSREKRERSR) the composition is skewed to basic and acidic residues. The disordered stretch occupies residues 139–917 (EKLASMKKQD…MRKAQVSPQS (779 aa)). An N6-acetyllysine modification is found at lysine 140. Over residues 171–207 (SPRRRKSRSPSPRRRSSPVRRERKRSHSRSPRHRTKS) the composition is skewed to basic residues. Residues 214–234 (PEKKEKTPELPEPSVKVKEPS) show a composition bias toward basic and acidic residues. Threonine 220 carries the post-translational modification Phosphothreonine. A Phosphoserine modification is found at serine 227. Residue lysine 231 forms a Glycyl lysine isopeptide (Lys-Gly) (interchain with G-Cter in SUMO1); alternate linkage. Lysine 231 participates in a covalent cross-link: Glycyl lysine isopeptide (Lys-Gly) (interchain with G-Cter in SUMO2); alternate. 2 positions are modified to phosphoserine: serine 234 and serine 240. Threonine 241 is subject to Phosphothreonine. The segment covering 246–275 (KVPKPEPIPEPKEPSPEKNSKKEKEKEKTR) has biased composition (basic and acidic residues). Lysine 249 is covalently cross-linked (Glycyl lysine isopeptide (Lys-Gly) (interchain with G-Cter in SUMO2)). The residue at position 260 (serine 260) is a Phosphoserine. 2 stretches are compositionally biased toward basic residues: residues 276–329 (PRSR…RTPP) and 336–351 (PRHRRSRSPVRRRRRS). Residues 300-702 (RRHRSRSRSY…NKRHSPSPRP (403 aa)) form a necessary for speckles and matrix localization region. Low complexity predominate over residues 352–368 (SASLSGSSSSSSSSRSR). A phosphoserine mark is found at serine 389, serine 391, serine 393, and serine 402. Threonine 406 is modified (phosphothreonine). Phosphoserine is present on serine 414. Position 416 is a phosphothreonine (threonine 416). Serine 420, serine 429, serine 431, and serine 436 each carry phosphoserine. A compositionally biased stretch (polar residues) spans 428–438 (VSVSPGRTSGK). Lysine 447 participates in a covalent cross-link: Glycyl lysine isopeptide (Lys-Gly) (interchain with G-Cter in SUMO2). Phosphoserine occurs at positions 450 and 452. A Glycyl lysine isopeptide (Lys-Gly) (interchain with G-Cter in SUMO2) cross-link involves residue lysine 459. A phosphoserine mark is found at serine 463 and serine 465. Lysine 472 is covalently cross-linked (Glycyl lysine isopeptide (Lys-Gly) (interchain with G-Cter in SUMO2)). At serine 478 the chain carries Phosphoserine. Over residues 478 to 501 (SVQQRRQYRRQNQQSSSDSGSSSS) the composition is skewed to low complexity. A compositionally biased stretch (basic and acidic residues) spans 503 to 518 (EDERPKRSHVKNGEVG). Phosphoserine occurs at positions 524, 526, 528, 530, 532, 563, and 565. A compositionally biased stretch (basic residues) spans 557–574 (SGRRRRSPSPPPTRRRRS). Threonine 569 carries the post-translational modification Phosphothreonine. Residues serine 574 and serine 576 each carry the phosphoserine modification. Residues 581 to 606 (PRRRRTPTPPPRRRTPSPPPRRRSPS) show a composition bias toward basic residues. Phosphothreonine is present on residues threonine 586, threonine 588, and threonine 595. Serine 597 is subject to Phosphoserine. Positions 607–619 (PRRYSPPIQRRYS) are enriched in low complexity. Tyrosine 610 bears the Phosphotyrosine mark. Phosphoserine occurs at positions 611, 619, and 621. Threonine 628 is subject to Phosphothreonine. A phosphoserine mark is found at serine 630, serine 640, serine 642, serine 650, and serine 652. The segment covering 635–650 (PKRRASPSPPPKRRVS) has biased composition (basic residues). Residues 663 to 677 (TKRRSPSLSSKHRKG) show a composition bias toward basic residues. Residues 699–713 (SPRPRAPQTSSPPPV) are compositionally biased toward pro residues. 6 positions are modified to phosphoserine: serine 708, serine 709, serine 718, serine 720, serine 726, and serine 728. Low complexity-rich tracts occupy residues 714-732 (RRGASSSPQRRQSPSPSTR), 749-772 (AASPSPQSVRRVSSSRSVSGSPEP), and 782-799 (SPVQSQSPSTNWSPAVPV). Residue threonine 731 is modified to Phosphothreonine. Phosphoserine is present on residues serine 751, serine 753, serine 761, serine 765, serine 767, serine 769, serine 782, serine 786, serine 788, and serine 790. Threonine 791 carries the post-translational modification Phosphothreonine. A phosphoserine mark is found at serine 794 and serine 804. At threonine 806 the chain carries Phosphothreonine. Phosphoserine is present on residues serine 808, serine 810, and serine 815. Residues 822-847 (KKKKKKKDKKHKKDKKHKKHKKHKKE) show a composition bias toward basic residues. Over residues 850–879 (VAAAAAAAVTPAAIAAATTTLAQEEPVAAP) the composition is skewed to low complexity. Lysine 882 participates in a covalent cross-link: Glycyl lysine isopeptide (Lys-Gly) (interchain with G-Cter in SUMO2). A Phosphothreonine modification is found at threonine 885. The residue at position 887 (serine 887) is a Phosphoserine. Over residues 895 to 905 (DLEKHLREKAL) the composition is skewed to basic and acidic residues. Serine 914 is modified (phosphoserine).

It belongs to the splicing factor SR family. Identified in the spliceosome C complex. Found in a pre-mRNA splicing complex with SFRS4, SFRS5, SNRP70, SNRPA1, SRRM1 and SRRM2. Component of the minor spliceosome, which splices U12-type introns. Found in a pre-mRNA exonic splicing enhancer (ESE) complex with SNRP70, SNRPA1, SRRM1 and TRA2B/SFRS10. Found in a mRNA splicing-dependent exon junction complex (EJC) with DEK, PRPF8, NCBP1, RBM8A, RNPS1, SRRM1 and ALYREF/THOC4. Interacts with DDX39B, CPSF1, RBM8A, RNPS1, and ALYREF/THOC4. Seems to be a compound of RNA export complexes that are released from speckles in a ATP-dependent manner. Post-translationally, phosphorylated on multiple serine and threonine residues by DYRK3 during the G2-to-M transition, after the nuclear-envelope breakdown. Phosphorylation by DYRK3 promotes disassembly of nuclear speckles. In terms of processing, citrullinated by PADI4.

Part of pre- and post-splicing multiprotein mRNP complexes. As a component of the minor spliceosome, involved in the splicing of U12-type introns in pre-mRNAs. Involved in numerous pre-mRNA processing events. Promotes constitutive and exonic splicing enhancer (ESE)-dependent splicing activation by bridging together sequence-specific (SR family proteins, SFRS4, SFRS5 and TRA2B/SFRS10) and basal snRNP (SNRP70 and SNRPA1) factors of the spliceosome. Stimulates mRNA 3'-end cleavage independently of the formation of an exon junction complex. Binds both pre-mRNA and spliced mRNA 20-25 nt upstream of exon-exon junctions. Binds RNA and DNA with low sequence specificity and has similar preference for either double- or single-stranded nucleic acid substrates. In Pongo abelii (Sumatran orangutan), this protein is Serine/arginine repetitive matrix protein 1 (SRRM1).